The following is a 216-amino-acid chain: Probable nicotinate-nucleotide adenylyltransferase (216 aa).

The protein belongs to the NadD family.

It catalyses the reaction nicotinate beta-D-ribonucleotide + ATP + H(+) = deamido-NAD(+) + diphosphate. It participates in cofactor biosynthesis; NAD(+) biosynthesis; deamido-NAD(+) from nicotinate D-ribonucleotide: step 1/1. Its function is as follows. Catalyzes the reversible adenylation of nicotinate mononucleotide (NaMN) to nicotinic acid adenine dinucleotide (NaAD). The chain is Probable nicotinate-nucleotide adenylyltransferase from Buchnera aphidicola subsp. Schizaphis graminum (strain Sg).